A 226-amino-acid polypeptide reads, in one-letter code: Thaumatin-like protein (226 aa).

The first 24 residues, Met-1 to Ala-24, serve as a signal peptide directing secretion. Disulfide bonds link Cys-33-Cys-225, Cys-74-Cys-84, Cys-89-Cys-95, Cys-140-Cys-214, Cys-145-Cys-197, Cys-153-Cys-163, Cys-167-Cys-176, and Cys-177-Cys-184.

This sequence belongs to the thaumatin family. Expressed in fruits.

It is found in the secreted. Its function is as follows. 3D-structure modeling suggests it may have endo-(1,3)-beta-glucanase activity. The protein is Thaumatin-like protein of Olea europaea (Common olive).